The chain runs to 365 residues: DNA replication and repair protein RecF (365 aa).

30–37 (GLNAQGKT) contributes to the ATP binding site.

It belongs to the RecF family.

The protein localises to the cytoplasm. Functionally, the RecF protein is involved in DNA metabolism; it is required for DNA replication and normal SOS inducibility. RecF binds preferentially to single-stranded, linear DNA. It also seems to bind ATP. The polypeptide is DNA replication and repair protein RecF (Chlamydia trachomatis serovar L2b (strain UCH-1/proctitis)).